A 728-amino-acid polypeptide reads, in one-letter code: MSSRIDRDVINALIAGHFADPFSVLGMHQTQAGLEVRALLPDATDVWVIEPKTGRKVGKLECLDARGFFCGVLPRRKNFFRYQLAVTWHGQQNLIDDPYRFGPLMQEMDAWLLSEGTHLRPYETLGAHADTMDGVTGTRFSVWAPNARRVSVVGQFNYWDGRRHPMRLRKESGIWELFIPGAHNGQLYKFELLDANGNLRIKADPYAFEAQMRPETASMICGLPEKVTPSEERQKANQFDAPISIYEVHLGSWRRHTDNNFWLSYRELADQLVPYAKWMGFTHLELLPVNEHPFDGSWGYQPTGLYAPTRRFGTLDDFRYFINAAHAAGLNVILDWVPGHFPSDEFSLAEFDGTHLYEHSDPREGYHQDWNTLIYNYGRREVSNYLVGNALYWMERFGIDALRVDAVASMIYRDYSRKEGEWIPNEFGGRENLEAIEFLRNTNRIIGEQVPGAVSMAEESTDFSGVTRPPETGGLGFWYKWNLGWMHDTLDYMKLDPVYRQYHHDKLTFGMLYNHTENFVLPLSHDEVVHGKKSILDRMPGDAWQKFANLRAYYGWMWAFPGKKLLFMGNEFAQGREWNHDASLDWHLLEGGDNWHHGVQRLVRDLNHTYRHHKALHELDFDAYGFEWLVVDDNERSVLIFVRRDKAGNEIIVASNFTPVPRHDYRFGINQPGRWREILNTDSMHYHGSNTGNGGVVHSDEIESHGRQHSLNLTLPPLATIWLMREGE.

Residue aspartate 405 is the Nucleophile of the active site. Glutamate 458 (proton donor) is an active-site residue.

This sequence belongs to the glycosyl hydrolase 13 family. GlgB subfamily. Monomer.

The catalysed reaction is Transfers a segment of a (1-&gt;4)-alpha-D-glucan chain to a primary hydroxy group in a similar glucan chain.. It functions in the pathway glycan biosynthesis; glycogen biosynthesis. Functionally, catalyzes the formation of the alpha-1,6-glucosidic linkages in glycogen by scission of a 1,4-alpha-linked oligosaccharide from growing alpha-1,4-glucan chains and the subsequent attachment of the oligosaccharide to the alpha-1,6 position. The protein is 1,4-alpha-glucan branching enzyme GlgB of Salmonella paratyphi A (strain ATCC 9150 / SARB42).